The primary structure comprises 309 residues: Protein FdhE (309 aa).

This sequence belongs to the FdhE family.

It localises to the cytoplasm. Functionally, necessary for formate dehydrogenase activity. This is Protein FdhE from Salmonella paratyphi A (strain ATCC 9150 / SARB42).